The following is a 189-amino-acid chain: Ribonuclease M5 2 (189 aa).

The 84-residue stretch at 8–91 (SQVIVAEGRD…VFLKRDEAVP (84 aa)) folds into the Toprim domain. Residues glutamate 14, aspartate 60, and aspartate 62 each contribute to the Mg(2+) site.

This sequence belongs to the ribonuclease M5 family. The cofactor is Mg(2+).

The protein localises to the cytoplasm. It catalyses the reaction Endonucleolytic cleavage of RNA, removing 21 and 42 nucleotides, respectively, from the 5'- and 3'-termini of a 5S-rRNA precursor.. Functionally, required for correct processing of both the 5' and 3' ends of 5S rRNA precursor. Cleaves both sides of a double-stranded region yielding mature 5S rRNA in one step. This chain is Ribonuclease M5 2, found in Ligilactobacillus salivarius (strain UCC118) (Lactobacillus salivarius).